A 264-amino-acid polypeptide reads, in one-letter code: 3-methyl-2-oxobutanoate hydroxymethyltransferase (264 aa).

Mg(2+) contacts are provided by D45 and D84. Residues D45–S46, D84, and K112 each bind 3-methyl-2-oxobutanoate. E114 provides a ligand contact to Mg(2+). E181 functions as the Proton acceptor in the catalytic mechanism.

It belongs to the PanB family. As to quaternary structure, homodecamer; pentamer of dimers. Mg(2+) is required as a cofactor.

It localises to the cytoplasm. The catalysed reaction is 3-methyl-2-oxobutanoate + (6R)-5,10-methylene-5,6,7,8-tetrahydrofolate + H2O = 2-dehydropantoate + (6S)-5,6,7,8-tetrahydrofolate. The protein operates within cofactor biosynthesis; (R)-pantothenate biosynthesis; (R)-pantoate from 3-methyl-2-oxobutanoate: step 1/2. Catalyzes the reversible reaction in which hydroxymethyl group from 5,10-methylenetetrahydrofolate is transferred onto alpha-ketoisovalerate to form ketopantoate. This chain is 3-methyl-2-oxobutanoate hydroxymethyltransferase, found in Shigella flexneri serotype 5b (strain 8401).